The chain runs to 148 residues: Deoxyuridine 5'-triphosphate nucleotidohydrolase (148 aa).

Residues 67–69 (RSG), N80, 84–86 (LID), and M94 each bind substrate.

The protein belongs to the dUTPase family. Requires Mg(2+) as cofactor.

The enzyme catalyses dUTP + H2O = dUMP + diphosphate + H(+). It functions in the pathway pyrimidine metabolism; dUMP biosynthesis; dUMP from dCTP (dUTP route): step 2/2. In terms of biological role, this enzyme is involved in nucleotide metabolism: it produces dUMP, the immediate precursor of thymidine nucleotides and it decreases the intracellular concentration of dUTP so that uracil cannot be incorporated into DNA. This chain is Deoxyuridine 5'-triphosphate nucleotidohydrolase, found in Paraburkholderia xenovorans (strain LB400).